We begin with the raw amino-acid sequence, 1498 residues long: Rap guanine nucleotide exchange factor 2 (1498 aa).

Disordered regions lie at residues 40 to 59 and 68 to 101; these read HVSS…SSSL and SEAG…SDPL. Residues 83 to 94 show a composition bias toward acidic residues; sequence VDSEDDDDEEDI. 135–252 is a binding site for a nucleoside 3',5'-cyclic phosphate; sequence AFANMTMSVR…QKVEEEGEIV (118 aa). Residues 267–380 form the N-terminal Ras-GEF domain; it reads KGHIVIKGTS…RLLNIACAAK (114 aa). The region spanning 385–468 is the PDZ domain; sequence LMTLTKPSRE…LSITVKTNLF (84 aa). At S501 the chain carries Phosphoserine. The Ras-associating domain maps to 606–692; it reads PDQVLRVFKA…GRYYLKNNME (87 aa). A Phosphothreonine modification is found at T644. In terms of domain architecture, Ras-GEF spans 717–944; it reads STVEVATQLS…SQGSTNATVL (228 aa). Phosphoserine is present on residues S806, S930, S933, S1022, S1079, S1088, S1094, S1115, S1119, S1158, and S1175. Residues 1002–1048 form a disordered region; it reads PATNTLPKNPGDKKPVKSETSPVAPRAGSQQKAQAQPPPPQPQPQHK. Residues 1094 to 1159 form a disordered region; it reads SLERHKKQAE…RSSIVSNSSF (66 aa). Composition is skewed to low complexity over residues 1110 to 1124 and 1140 to 1159; these read SSQL…QSSP and SDSG…NSSF. Disordered stretches follow at residues 1224–1257, 1304–1371, and 1392–1498; these read STEE…GSHD, TKYN…TKPV, and EGRY…VSAV. Polar residues-rich tracts occupy residues 1246–1257 and 1306–1330; these read GSWTSCSSGSHD and YNRQ…SSTG. Low complexity predominate over residues 1354–1365; sequence EAESSSVTSVTT. Over residues 1487-1498 the composition is skewed to acidic residues; sequence TEEDEDEQVSAV.

It belongs to the RAPGEF2 family. In terms of assembly, found in a complex, at least composed of KIDINS220, MAGI2, NTRK1 and RAPGEF2; the complex is mainly formed at late endosomes in a neuronal growth factor (NGF)-dependent manner. Interacts (via C-terminal domain) with NEDD4 (via WW domains); this interaction leads to ubiquitination and degradation via the proteasome pathway in a cAMP-independent manner. Interacts with MAGI1 (via PDZ domain). Interacts with ADRB1 (via C-terminal PDZ motif); the interaction is direct. Interacts (via Ras-associating domain) with RAP1A (via GTP-bound active form). Interacts weakly with HRAS (via GDP- and GTP-bound forms). Interacts (via C-terminal domain) with MAGI2 (via PDZ and WW domains). Interacts with CDH1, CTNNB1 and TJP1. In terms of processing, ubiquitinated by NEDD4, leading to proteasomal degradation. Phosphorylation by PLK2 promotes its activity.

It localises to the cell junction. Its subcellular location is the cytoplasm. It is found in the perinuclear region. The protein resides in the cell membrane. The protein localises to the late endosome. Its function is as follows. Functions as a guanine nucleotide exchange factor (GEF), which activates Rap and Ras family of small GTPases by exchanging bound GDP for free GTP in a cAMP-dependent manner. Serves as a link between cell surface receptors and Rap/Ras GTPases in intracellular signaling cascades. Also acts as an effector for Rap1 by direct association with Rap1-GTP thereby leading to the amplification of Rap1-mediated signaling. Shows weak activity on HRAS. It is controversial whether RAPGEF2 binds cAMP and cGMP or not. Its binding to ligand-activated beta-1 adrenergic receptor ADRB1 leads to the Ras activation through the G(s)-alpha signaling pathway. Involved in the cAMP-induced Ras and Erk1/2 signaling pathway that leads to sustained inhibition of long term melanogenesis by reducing dendrite extension and melanin synthesis. Also provides inhibitory signals for cell proliferation of melanoma cells and promotes their apoptosis in a cAMP-independent nanner. Regulates cAMP-induced neuritogenesis by mediating the Rap1/B-Raf/ERK signaling through a pathway that is independent on both PKA and RAPGEF3/RAPGEF4. Involved in neuron migration and in the formation of the major forebrain fiber connections forming the corpus callosum, the anterior commissure and the hippocampal commissure during brain development. Involved in neuronal growth factor (NGF)-induced sustained activation of Rap1 at late endosomes and in brain-derived neurotrophic factor (BDNF)-induced axon outgrowth of hippocampal neurons. Plays a role in the regulation of embryonic blood vessel formation and in the establishment of basal junction integrity and endothelial barrier function. May be involved in the regulation of the vascular endothelial growth factor receptor KDR and cadherin CDH5 expression at allantois endothelial cell-cell junctions. This chain is Rap guanine nucleotide exchange factor 2 (RAPGEF2), found in Canis lupus familiaris (Dog).